A 214-amino-acid polypeptide reads, in one-letter code: Pyridoxine/pyridoxamine 5'-phosphate oxidase (214 aa).

Substrate-binding positions include 8–11 (RKSY) and Lys67. Residues 62 to 67 (RVVLLK), 77 to 78 (YT), Lys84, and Gln106 each bind FMN. Substrate-binding residues include Tyr124, Arg128, and Ser132. FMN is bound by residues 141 to 142 (QS) and Trp186. 192-194 (RLH) contributes to the substrate binding site. An FMN-binding site is contributed by Arg196.

The protein belongs to the pyridoxamine 5'-phosphate oxidase family. As to quaternary structure, homodimer. FMN is required as a cofactor.

It catalyses the reaction pyridoxamine 5'-phosphate + O2 + H2O = pyridoxal 5'-phosphate + H2O2 + NH4(+). The enzyme catalyses pyridoxine 5'-phosphate + O2 = pyridoxal 5'-phosphate + H2O2. The protein operates within cofactor metabolism; pyridoxal 5'-phosphate salvage; pyridoxal 5'-phosphate from pyridoxamine 5'-phosphate: step 1/1. It participates in cofactor metabolism; pyridoxal 5'-phosphate salvage; pyridoxal 5'-phosphate from pyridoxine 5'-phosphate: step 1/1. Functionally, catalyzes the oxidation of either pyridoxine 5'-phosphate (PNP) or pyridoxamine 5'-phosphate (PMP) into pyridoxal 5'-phosphate (PLP). This chain is Pyridoxine/pyridoxamine 5'-phosphate oxidase, found in Flavobacterium psychrophilum (strain ATCC 49511 / DSM 21280 / CIP 103535 / JIP02/86).